The sequence spans 504 residues: Cytochrome P450 3A16 (504 aa).

Cys-443 contributes to the heme binding site.

The protein belongs to the cytochrome P450 family. The cofactor is heme.

The protein localises to the endoplasmic reticulum membrane. Its subcellular location is the microsome membrane. The enzyme catalyses an organic molecule + reduced [NADPH--hemoprotein reductase] + O2 = an alcohol + oxidized [NADPH--hemoprotein reductase] + H2O + H(+). Its function is as follows. Cytochromes P450 are a group of heme-thiolate monooxygenases. In liver microsomes, this enzyme is involved in an NADPH-dependent electron transport pathway. It oxidizes a variety of structurally unrelated compounds, including steroids, fatty acids, and xenobiotics. This Mus musculus (Mouse) protein is Cytochrome P450 3A16 (Cyp3a16).